The primary structure comprises 201 residues: uncharacterized protein (201 aa).

Positions 53–74 (PKKNTAHKNSTTSTVASSGNTT) are disordered. Over residues 59–74 (HKNSTTSTVASSGNTT) the composition is skewed to polar residues. Residues 88–136 (AKRLSHKEVERRRREAISEGIKELANIVPGCEKNKGSILQRTAQYIRSL) form the bHLH domain.

It localises to the nucleus. This is an uncharacterized protein from Schizosaccharomyces pombe (strain 972 / ATCC 24843) (Fission yeast).